A 260-amino-acid polypeptide reads, in one-letter code: 33 kDa inner dynein arm light chain, axonemal (260 aa).

The tract at residues 1 to 66 is disordered; sequence MIPPNASLVK…PVESQKAQQT (66 aa). A coiled-coil region spans residues 177-260; that stretch reads MRKALQAEQG…LEGIIAPNKK (84 aa).

It belongs to the inner dynein arm light chain family. In terms of processing, may undergo some post-translational modifications that shift its mobility on SDS gels.

Functionally, may play a dynamic role in flagellar motility. In Strongylocentrotus purpuratus (Purple sea urchin), this protein is 33 kDa inner dynein arm light chain, axonemal.